Here is a 314-residue protein sequence, read N- to C-terminus: Homeobox protein knotted-1-like 3 (314 aa).

An ELK domain is found at 218 to 238 (ELKIELKQGFKSRIEDVREEI). The homeobox; TALE-type DNA-binding region spans 239–302 (LRKRRAGKLP…NQRKRNWHNN (64 aa)).

Belongs to the TALE/KNOX homeobox family. In terms of tissue distribution, isoform 1 is expressed in roots and flowers, and at lower levels in leaf blades and leaf sheaths. Isoform 2 is expressed in roots and flowers.

The protein localises to the nucleus. This Oryza sativa subsp. japonica (Rice) protein is Homeobox protein knotted-1-like 3 (HOS66).